The sequence spans 377 residues: Homocitrate synthase 1 (377 aa).

The Pyruvate carboxyltransferase domain occupies 4–255 (VLINDTTLRD…DMGIDTPRLL (252 aa)).

This sequence belongs to the alpha-IPM synthase/homocitrate synthase family.

It catalyses the reaction acetyl-CoA + 2-oxoglutarate + H2O = (2R)-homocitrate + CoA + H(+). Functionally, this protein is a Fe-Mo-cofactor biosynthetic component. This chain is Homocitrate synthase 1 (nifV1), found in Nostoc sp. (strain PCC 7120 / SAG 25.82 / UTEX 2576).